A 201-amino-acid chain; its full sequence is GTP cyclohydrolase 1 (201 aa).

Positions 90, 93, and 163 each coordinate Zn(2+).

Belongs to the GTP cyclohydrolase I family. In terms of assembly, homomer.

The catalysed reaction is GTP + H2O = 7,8-dihydroneopterin 3'-triphosphate + formate + H(+). Its pathway is cofactor biosynthesis; 7,8-dihydroneopterin triphosphate biosynthesis; 7,8-dihydroneopterin triphosphate from GTP: step 1/1. The sequence is that of GTP cyclohydrolase 1 from Streptomyces griseus subsp. griseus (strain JCM 4626 / CBS 651.72 / NBRC 13350 / KCC S-0626 / ISP 5235).